The chain runs to 98 residues: ATP synthase subunit alpha, chloroplastic (98 aa).

This sequence belongs to the ATPase alpha/beta chains family. F-type ATPases have 2 components, CF(1) - the catalytic core - and CF(0) - the membrane proton channel. CF(1) has five subunits: alpha(3), beta(3), gamma(1), delta(1), epsilon(1). CF(0) has four main subunits: a, b, b' and c.

The protein localises to the plastid. It is found in the chloroplast thylakoid membrane. It catalyses the reaction ATP + H2O + 4 H(+)(in) = ADP + phosphate + 5 H(+)(out). Its function is as follows. Produces ATP from ADP in the presence of a proton gradient across the membrane. The alpha chain is a regulatory subunit. This is ATP synthase subunit alpha, chloroplastic (atpA) from Populus euphratica (Euphrates poplar).